A 253-amino-acid chain; its full sequence is Ubiquinone/menaquinone biosynthesis C-methyltransferase UbiE (253 aa).

S-adenosyl-L-methionine is bound by residues Thr-76, Asp-97, and 125–126 (NA).

It belongs to the class I-like SAM-binding methyltransferase superfamily. MenG/UbiE family.

The enzyme catalyses a 2-demethylmenaquinol + S-adenosyl-L-methionine = a menaquinol + S-adenosyl-L-homocysteine + H(+). It carries out the reaction a 2-methoxy-6-(all-trans-polyprenyl)benzene-1,4-diol + S-adenosyl-L-methionine = a 5-methoxy-2-methyl-3-(all-trans-polyprenyl)benzene-1,4-diol + S-adenosyl-L-homocysteine + H(+). It participates in quinol/quinone metabolism; menaquinone biosynthesis; menaquinol from 1,4-dihydroxy-2-naphthoate: step 2/2. Its pathway is cofactor biosynthesis; ubiquinone biosynthesis. In terms of biological role, methyltransferase required for the conversion of demethylmenaquinol (DMKH2) to menaquinol (MKH2) and the conversion of 2-polyprenyl-6-methoxy-1,4-benzoquinol (DDMQH2) to 2-polyprenyl-3-methyl-6-methoxy-1,4-benzoquinol (DMQH2). This Nitrobacter hamburgensis (strain DSM 10229 / NCIMB 13809 / X14) protein is Ubiquinone/menaquinone biosynthesis C-methyltransferase UbiE.